The sequence spans 276 residues: Reaction center protein L chain (276 aa).

The next 3 helical transmembrane spans lie at 33–56 (GFFGVTTLLFTVLGTALIVWGAAL), 85–113 (GLWQIITFSAIGAFVSWALREVEICRKLG), and 116–141 (YHIPFAFGFAILAYVSLVVIRPVMMG). Residues His-154 and His-174 each contribute to the (7R,8Z)-bacteriochlorophyll b site. The helical transmembrane segment at 171 to 200 (NPAHMLGITLFFTTCLALALHGSLILSAAN) threads the bilayer. Residue His-191 participates in Fe cation binding. An a ubiquinone-binding site is contributed by Phe-217. Residues 226–252 (GTLGIHRVGLILALSAVVWSIICMILS) traverse the membrane as a helical segment. Fe cation is bound at residue His-231.

The protein belongs to the reaction center PufL/M/PsbA/D family. In terms of assembly, reaction center is composed of four bacteriochlorophylls, two bacteriopheophytins, two ubiquinones, one iron, and three highly hydrophobic polypeptide chains (designated L, M, and H).

The protein localises to the cellular chromatophore membrane. Its function is as follows. The reaction center is a membrane-bound complex that mediates the initial photochemical event in the electron transfer process of photosynthesis. The chain is Reaction center protein L chain (pufL) from Rhodospirillum rubrum.